The chain runs to 196 residues: Zinc metalloproteinase-disintegrin-like bothrojarin-3 (196 aa).

Residues Pro2–Asn88 enclose the Disintegrin domain. Residues Val4, Leu9, Glu11, Glu14, and Asp17 each contribute to the Ca(2+) site. Disulfide bonds link Cys5–Cys34, Cys16–Cys29, Cys18–Cys24, Cys28–Cys51, Cys42–Cys48, Cys47–Cys73, Cys60–Cys80, Cys67–Cys99, Cys92–Cys104, Cys111–Cys161, Cys126–Cys168, Cys139–Cys149, and Cys156–Cys193. The D/ECD-tripeptide signature appears at Glu66 to Asp68.

It belongs to the venom metalloproteinase (M12B) family. P-III subfamily. P-IIIa sub-subfamily. As to quaternary structure, monomer. It depends on Zn(2+) as a cofactor. Glycosylated. Expressed by the venom gland.

It localises to the secreted. Functionally, the hemorrhagic metalloproteinase-disintegrin-like bothrojarin-1 is a potent inhibitor of collagen-induced platelet aggregation by blockage of alpha-2/beta-1 (ITGA2/ITGB1) integrin. It does not present any fibrinogen-clotting activity. The chain is Zinc metalloproteinase-disintegrin-like bothrojarin-3 from Bothrops jararaca (Jararaca).